The sequence spans 290 residues: MMTSNSYWQRLKVAFQYVMPQIYLTQIAGWFAKQKWGKITHFVIKAFAKKYNIDMSIAQKGQFSDYASFNEFFIRPLKENARPINQNPTALCLPADGRISECGHIDDNLLLQAKGHFFSLEDLLAEDKELVETFKNGEFVTTYLSPRDYHRVHMPCDATLRKMIYVPGDLFSVNPFLAQYVPNLFARNERVICVFDTEFGTMVQILVGATITASIGTTWAGVINPPRHNEVKTWTYEGESAVKLLKGQEMGWFQLGSTVINLFQANQVRLADHLSVNEPVRMGEILAYKK.

Catalysis depends on charge relay system; for autoendoproteolytic cleavage activity residues Asp-96, His-153, and Ser-257. The active-site Schiff-base intermediate with substrate; via pyruvic acid; for decarboxylase activity is the Ser-257. Ser-257 bears the Pyruvic acid (Ser); by autocatalysis mark.

The protein belongs to the phosphatidylserine decarboxylase family. PSD-B subfamily. Prokaryotic type I sub-subfamily. As to quaternary structure, heterodimer of a large membrane-associated beta subunit and a small pyruvoyl-containing alpha subunit. Pyruvate is required as a cofactor. Post-translationally, is synthesized initially as an inactive proenzyme. Formation of the active enzyme involves a self-maturation process in which the active site pyruvoyl group is generated from an internal serine residue via an autocatalytic post-translational modification. Two non-identical subunits are generated from the proenzyme in this reaction, and the pyruvate is formed at the N-terminus of the alpha chain, which is derived from the carboxyl end of the proenzyme. The autoendoproteolytic cleavage occurs by a canonical serine protease mechanism, in which the side chain hydroxyl group of the serine supplies its oxygen atom to form the C-terminus of the beta chain, while the remainder of the serine residue undergoes an oxidative deamination to produce ammonia and the pyruvoyl prosthetic group on the alpha chain. During this reaction, the Ser that is part of the protease active site of the proenzyme becomes the pyruvoyl prosthetic group, which constitutes an essential element of the active site of the mature decarboxylase.

It localises to the cell membrane. It catalyses the reaction a 1,2-diacyl-sn-glycero-3-phospho-L-serine + H(+) = a 1,2-diacyl-sn-glycero-3-phosphoethanolamine + CO2. Its pathway is phospholipid metabolism; phosphatidylethanolamine biosynthesis; phosphatidylethanolamine from CDP-diacylglycerol: step 2/2. Its function is as follows. Catalyzes the formation of phosphatidylethanolamine (PtdEtn) from phosphatidylserine (PtdSer). This is Phosphatidylserine decarboxylase proenzyme from Haemophilus influenzae (strain 86-028NP).